The chain runs to 213 residues: Bcl-2-related ovarian killer protein (213 aa).

A BH4 motif is present at residues 32–44 (KALCRDYINSRLI). A BH3 motif is present at residues 67 to 83 (VSAILLRLGDELEYIRP). A BH1 motif is present at residues 113–132 (QIFTAGITWGKVVSLYAVAA). Residues 165 to 179 (WLKRRGGWADITKCV) carry the BH2 motif. A helical transmembrane segment spans residues 190–210 (WLVAAVCSFGHFLKAIFFVLL).

Belongs to the Bcl-2 family.

The protein resides in the membrane. In terms of biological role, may play a role in apoptosis. This is Bcl-2-related ovarian killer protein from Gallus gallus (Chicken).